We begin with the raw amino-acid sequence, 118 residues long: Large ribosomal subunit protein bL20 (118 aa).

The protein belongs to the bacterial ribosomal protein bL20 family.

Functionally, binds directly to 23S ribosomal RNA and is necessary for the in vitro assembly process of the 50S ribosomal subunit. It is not involved in the protein synthesizing functions of that subunit. In Pseudoalteromonas atlantica (strain T6c / ATCC BAA-1087), this protein is Large ribosomal subunit protein bL20.